A 224-amino-acid chain; its full sequence is Lipoprotein-releasing system ATP-binding protein LolD (224 aa).

One can recognise an ABC transporter domain in the interval 6 to 224 (LEFCNVSKFF…IVNHSLISSI (219 aa)). 43–50 (GASGVGKT) is a binding site for ATP.

It belongs to the ABC transporter superfamily. Lipoprotein translocase (TC 3.A.1.125) family. In terms of assembly, the complex is composed of two ATP-binding proteins (LolD) and two transmembrane proteins (LolC and LolE).

It localises to the cell inner membrane. Part of the ABC transporter complex LolCDE involved in the translocation of mature outer membrane-directed lipoproteins, from the inner membrane to the periplasmic chaperone, LolA. Responsible for the formation of the LolA-lipoprotein complex in an ATP-dependent manner. The polypeptide is Lipoprotein-releasing system ATP-binding protein LolD (Neorickettsia sennetsu (strain ATCC VR-367 / Miyayama) (Ehrlichia sennetsu)).